The sequence spans 556 residues: Phenylalanine--tRNA ligase beta subunit (556 aa).

One can recognise a B5 domain in the interval 269–345; it reads MEPEEVVYDV…MGYGYERIEP (77 aa). Mg(2+) is bound by residues Asp-323, Asp-329, Glu-332, and Glu-333.

The protein belongs to the phenylalanyl-tRNA synthetase beta subunit family. Type 2 subfamily. In terms of assembly, tetramer of two alpha and two beta subunits. It depends on Mg(2+) as a cofactor.

The protein localises to the cytoplasm. The catalysed reaction is tRNA(Phe) + L-phenylalanine + ATP = L-phenylalanyl-tRNA(Phe) + AMP + diphosphate + H(+). The polypeptide is Phenylalanine--tRNA ligase beta subunit (Thermofilum pendens (strain DSM 2475 / Hrk 5)).